The primary structure comprises 215 residues: 16S rRNA (adenine(1408)-N(1))-methyltransferase (215 aa).

S-adenosyl-L-methionine contacts are provided by residues glycine 32, aspartate 55, 87–88 (AE), 102–107 (LMPWGS), and 191–193 (TSW).

It belongs to the methyltransferase superfamily. Kanamycin-apramycin resistance family.

The catalysed reaction is adenosine(1408) in 16S rRNA + S-adenosyl-L-methionine = N(1)-methyladenosine(1408) in 16S rRNA + S-adenosyl-L-homocysteine + H(+). Functionally, specifically methylates the N(1) position of adenine 1408 in 16S rRNA. Confers resistance to various aminoglycosides. The protein is 16S rRNA (adenine(1408)-N(1))-methyltransferase (kamB) of Streptoalloteichus hindustanus.